We begin with the raw amino-acid sequence, 310 residues long: Putative S-adenosyl-L-methionine-dependent methyltransferase MUL_4763 (310 aa).

S-adenosyl-L-methionine contacts are provided by residues Asp-137 and 166–167 (DL).

Belongs to the UPF0677 family.

Its function is as follows. Exhibits S-adenosyl-L-methionine-dependent methyltransferase activity. The polypeptide is Putative S-adenosyl-L-methionine-dependent methyltransferase MUL_4763 (Mycobacterium ulcerans (strain Agy99)).